A 242-amino-acid chain; its full sequence is Protein FsrB (242 aa).

Transmembrane regions (helical) follow at residues 29–49 (LTVYFSGLFNFLMILILSVLF), 52–72 (LSETFIVYVVLIFLRPVAGGW), 78–95 (WLCRLESIVIYVAIPFVL), 100–120 (VSLPFIYKILLICLLVVLFYW), and 160–180 (KIASVILYGLVIQGLMILPVT).

Belongs to the AgrB family.

Its subcellular location is the cell membrane. May be involved in the proteolytic processing of a quorum sensing system signal molecule precursor required for the regulation of the virulence genes for gelatinase (gelE) and a serine protease (sprE). This chain is Protein FsrB (fsrB), found in Enterococcus faecalis (strain ATCC 47077 / OG1RF).